The primary structure comprises 217 residues: Pyridoxine/pyridoxamine 5'-phosphate oxidase (217 aa).

Substrate-binding positions include 13–16 (RREY) and K71. FMN-binding positions include 66-71 (RIVLLK), 81-82 (YT), R87, K88, and Q110. Substrate is bound by residues Y128, R132, and S136. FMN contacts are provided by residues 145–146 (QS) and W190. 196 to 198 (RLH) serves as a coordination point for substrate. FMN is bound at residue R200.

Belongs to the pyridoxamine 5'-phosphate oxidase family. Homodimer. Requires FMN as cofactor.

It catalyses the reaction pyridoxamine 5'-phosphate + O2 + H2O = pyridoxal 5'-phosphate + H2O2 + NH4(+). The enzyme catalyses pyridoxine 5'-phosphate + O2 = pyridoxal 5'-phosphate + H2O2. It participates in cofactor metabolism; pyridoxal 5'-phosphate salvage; pyridoxal 5'-phosphate from pyridoxamine 5'-phosphate: step 1/1. It functions in the pathway cofactor metabolism; pyridoxal 5'-phosphate salvage; pyridoxal 5'-phosphate from pyridoxine 5'-phosphate: step 1/1. Its function is as follows. Catalyzes the oxidation of either pyridoxine 5'-phosphate (PNP) or pyridoxamine 5'-phosphate (PMP) into pyridoxal 5'-phosphate (PLP). The chain is Pyridoxine/pyridoxamine 5'-phosphate oxidase from Yersinia enterocolitica serotype O:8 / biotype 1B (strain NCTC 13174 / 8081).